Here is a 392-residue protein sequence, read N- to C-terminus: L-serine phosphate decarboxylase (392 aa).

Residues asparagine 22 to serine 29 are required for catalytic activity. Residue asparagine 180 coordinates O-phospho-L-serine. Lysine 243 carries the post-translational modification N6-(pyridoxal phosphate)lysine. Arginine 354 and arginine 368 together coordinate O-phospho-L-serine.

The protein belongs to the class-II pyridoxal-phosphate-dependent aminotransferase family. In terms of assembly, homodimer. Pyridoxal 5'-phosphate is required as a cofactor.

It catalyses the reaction O-phospho-L-serine + H(+) = phosphoethanolamine + CO2. It functions in the pathway cofactor biosynthesis. In terms of biological role, pyridoxal phosphate (PLP)-dependent decarboxylase involved in the biosynthesis of norcobamides, cofactors in the tetrachloroethene reductive dehalogenase PceA of S.multivorans. Catalyzes the decarboxylation of L-serine O-phosphate to ethanolamine O-phosphate, the precursor for the linkage between the nucleotide loop and the corrin ring in norcobamide. Less active with L-threonine phosphate. No activity with L-serine or L-threonine. Has no aminotransferase activity as no production of L-glutamate with L-histidinol phosphate and 2-oxoglutarate as substrates. Complements growth defects in the S.enterica cobD deletion mutant, but of the cobamides, the norpseudo-vitamin B12 (norpseudo-B12) rather than the pseudo-B12 is produced in the mutant. However, addition of L-threonine phosphate to the culture minimal medium of the mutant results in formation of also the pseudo-B12, indicating the dual substrate specificity of this enzyme. The chain is L-serine phosphate decarboxylase from Sulfurospirillum multivorans (strain DM 12446 / JCM 15788 / NBRC 109480).